The primary structure comprises 154 residues: Myoglobin (154 aa).

The Globin domain occupies G2 to K148. At S4 the chain carries Phosphoserine. A nitrite-binding site is contributed by H65. O2 is bound at residue H65. Position 68 is a phosphothreonine (T68). H94 is a heme b binding site.

This sequence belongs to the globin family. Monomeric.

It localises to the cytoplasm. Its subcellular location is the sarcoplasm. It catalyses the reaction Fe(III)-heme b-[protein] + nitric oxide + H2O = Fe(II)-heme b-[protein] + nitrite + 2 H(+). It carries out the reaction H2O2 + AH2 = A + 2 H2O. Functionally, monomeric heme protein which primary function is to store oxygen and facilitate its diffusion within muscle tissues. Reversibly binds oxygen through a pentacoordinated heme iron and enables its timely and efficient release as needed during periods of heightened demand. Depending on the oxidative conditions of tissues and cells, and in addition to its ability to bind oxygen, it also has a nitrite reductase activity whereby it regulates the production of bioactive nitric oxide. Under stress conditions, like hypoxia and anoxia, it also protects cells against reactive oxygen species thanks to its pseudoperoxidase activity. The protein is Myoglobin (MB) of Oryctolagus cuniculus (Rabbit).